Here is a 763-residue protein sequence, read N- to C-terminus: Phosphoglycerol transferase I (763 aa).

The next 4 membrane-spanning stretches (helical) occupy residues 4 to 19, 26 to 48, 76 to 98, and 110 to 132; these read LLSV…IYAW, WWFA…LYAS, YILP…GWVL, and YSLL…RQIT.

Belongs to the OpgB family.

The protein resides in the cell inner membrane. It catalyses the reaction a phosphatidylglycerol + a membrane-derived-oligosaccharide D-glucose = a 1,2-diacyl-sn-glycerol + a membrane-derived-oligosaccharide 6-(glycerophospho)-D-glucose.. It participates in glycan metabolism; osmoregulated periplasmic glucan (OPG) biosynthesis. Transfers a phosphoglycerol residue from phosphatidylglycerol to the membrane-bound nascent glucan backbones. The polypeptide is Phosphoglycerol transferase I (Salmonella typhi).